The sequence spans 451 residues: Trigger factor (451 aa).

The 86-residue stretch at 165–250 folds into the PPIase FKBP-type domain; sequence DDKLTIDFEG…LHQIQAREAL (86 aa).

The protein belongs to the FKBP-type PPIase family. Tig subfamily.

The protein resides in the cytoplasm. It catalyses the reaction [protein]-peptidylproline (omega=180) = [protein]-peptidylproline (omega=0). Its function is as follows. Involved in protein export. Acts as a chaperone by maintaining the newly synthesized protein in an open conformation. Functions as a peptidyl-prolyl cis-trans isomerase. The chain is Trigger factor from Helicobacter pylori (strain HPAG1).